The chain runs to 1438 residues: Pyochelin synthetase PchE (1438 aa).

Residues 6–85 form the Carrier 1 domain; the sequence is DSRTALRDWL…AWLDLLACAD (80 aa). An O-(pantetheine 4'-phosphoryl)serine modification is found at Ser-46. The segment at 136–442 is condensation/cyclization; it reads RTRDVDPQRL…ARRQGQPRSA (307 aa). The interval 563 to 950 is adenylation; sequence RAAEAPDADA…GRVDQQVKVR (388 aa). The Carrier 2 domain maps to 1350–1425; it reads EPLEAHEQAL…GLARHLQVQT (76 aa). Ser-1385 carries the post-translational modification O-(pantetheine 4'-phosphoryl)serine.

Belongs to the NRP synthetase family. The cofactor is pantetheine 4'-phosphate.

The catalysed reaction is holo-[peptidyl-carrier protein] + L-cysteine + ATP = L-cysteinyl-[peptidyl-carrier protein] + AMP + diphosphate. It participates in siderophore biosynthesis. It functions in the pathway antifungal biosynthesis. Functionally, involved in the biosynthesis of the siderophore pyochelin. Accepts salicylate activated by PchD at the first peptidyl carrier domain (ArCP), and activates and fixes one molecule of cysteine at the second peptidyl carrier domain (PCP1) via a thioester linkage to the phosphopanthetheine moiety. Then catalyzes the condensation reaction between the salicylate bound to the first site and the cysteine bound to the second site, and the cyclization of the cysteine to form the salicyl-thiazolinyl-S-PCP1 intermediate at the second site. When this intermediate is released by the action of a thioesterase, it produces the antifungal antibiotic dihydroaeruginoic acid (Dha or hydroxyphenyl-thiazolinyl-carboxylate). This is Pyochelin synthetase PchE from Pseudomonas aeruginosa (strain ATCC 15692 / DSM 22644 / CIP 104116 / JCM 14847 / LMG 12228 / 1C / PRS 101 / PAO1).